The primary structure comprises 270 residues: Formamidopyrimidine-DNA glycosylase (270 aa).

Proline 2 (schiff-base intermediate with DNA) is an active-site residue. Glutamate 3 acts as the Proton donor in catalysis. The Proton donor; for beta-elimination activity role is filled by lysine 57. Residues histidine 90, arginine 109, and arginine 151 each coordinate DNA. The FPG-type zinc finger occupies 236-270 (QVYGRGGKLCMVCSNRLKEVRLGQRSTVYCTQCQR). Arginine 260 serves as the catalytic Proton donor; for delta-elimination activity.

Belongs to the FPG family. Monomer. The cofactor is Zn(2+).

It carries out the reaction Hydrolysis of DNA containing ring-opened 7-methylguanine residues, releasing 2,6-diamino-4-hydroxy-5-(N-methyl)formamidopyrimidine.. The enzyme catalyses 2'-deoxyribonucleotide-(2'-deoxyribose 5'-phosphate)-2'-deoxyribonucleotide-DNA = a 3'-end 2'-deoxyribonucleotide-(2,3-dehydro-2,3-deoxyribose 5'-phosphate)-DNA + a 5'-end 5'-phospho-2'-deoxyribonucleoside-DNA + H(+). Involved in base excision repair of DNA damaged by oxidation or by mutagenic agents. Acts as a DNA glycosylase that recognizes and removes damaged bases. Has a preference for oxidized purines, such as 7,8-dihydro-8-oxoguanine (8-oxoG). Has AP (apurinic/apyrimidinic) lyase activity and introduces nicks in the DNA strand. Cleaves the DNA backbone by beta-delta elimination to generate a single-strand break at the site of the removed base with both 3'- and 5'-phosphates. The chain is Formamidopyrimidine-DNA glycosylase from Idiomarina loihiensis (strain ATCC BAA-735 / DSM 15497 / L2-TR).